A 65-amino-acid polypeptide reads, in one-letter code: Trypsin inhibitor (65 aa).

Homotrimer.

The polypeptide is Trypsin inhibitor (Zea mays (Maize)).